The sequence spans 88 residues: Sapecin-B (88 aa).

Positions 1 to 24 are cleaved as a signal peptide; it reads MKFLTSLLLLFVVVMVSAVNLSMA. The propeptide occupies 25–54; it reads KESANQLTERLQELDGAAIQEPAELNRHKR. 3 disulfides stabilise this stretch: cysteine 57–cysteine 78, cysteine 64–cysteine 84, and cysteine 68–cysteine 86.

It belongs to the invertebrate defensin family. Type 1 subfamily. In terms of tissue distribution, hemocytes and fat body.

It localises to the secreted. Sapecins, which are potent bactericidal proteins, are produced in response to injury. Sapecin B is cytotoxic to Gram-positive bacteria. The protein is Sapecin-B of Sarcophaga peregrina (Flesh fly).